The following is a 494-amino-acid chain: UPF0371 protein str1377 (494 aa).

This sequence belongs to the UPF0371 family.

The protein is UPF0371 protein str1377 of Streptococcus thermophilus (strain CNRZ 1066).